A 47-amino-acid chain; its full sequence is Potassium channel toxin gamma-KTx 5.1 (47 aa).

4 disulfides stabilise this stretch: Cys-5/Cys-23, Cys-11/Cys-34, Cys-20/Cys-39, and Cys-24/Cys-41.

The protein belongs to the ergtoxin family. Gamma-KTx 5 subfamily. Expressed by the venom gland.

The protein localises to the secreted. Reversibly blocks Kv11/ERG potassium channels. This chain is Potassium channel toxin gamma-KTx 5.1, found in Centruroides sculpturatus (Arizona bark scorpion).